The following is a 235-amino-acid chain: Large ribosomal subunit protein uL1 (235 aa).

This sequence belongs to the universal ribosomal protein uL1 family. As to quaternary structure, part of the 50S ribosomal subunit.

In terms of biological role, binds directly to 23S rRNA. The L1 stalk is quite mobile in the ribosome, and is involved in E site tRNA release. Its function is as follows. Protein L1 is also a translational repressor protein, it controls the translation of the L11 operon by binding to its mRNA. This is Large ribosomal subunit protein uL1 from Renibacterium salmoninarum (strain ATCC 33209 / DSM 20767 / JCM 11484 / NBRC 15589 / NCIMB 2235).